Here is a 387-residue protein sequence, read N- to C-terminus: Protein MGF 360-4L (387 aa).

This sequence belongs to the asfivirus MGF 360 family.

In terms of biological role, plays a role in virus cell tropism, and may be required for efficient virus replication in macrophages. This is Protein MGF 360-4L from Ornithodoros (relapsing fever ticks).